A 152-amino-acid polypeptide reads, in one-letter code: Small ribosomal subunit protein uS13 (152 aa).

It belongs to the universal ribosomal protein uS13 family. In terms of assembly, component of the small ribosomal subunit.

Its subcellular location is the cytoplasm. In terms of biological role, component of the small ribosomal subunit. The ribosome is a large ribonucleoprotein complex responsible for the synthesis of proteins in the cell. Plays an essential role in early embryonic development. The sequence is that of Small ribosomal subunit protein uS13 (rps18) from Danio rerio (Zebrafish).